The sequence spans 95 residues: uncharacterized protein (95 aa).

This is an uncharacterized protein from Archaeoglobus fulgidus (strain ATCC 49558 / DSM 4304 / JCM 9628 / NBRC 100126 / VC-16).